We begin with the raw amino-acid sequence, 443 residues long: Glucose-6-phosphate isomerase (443 aa).

Catalysis depends on Glu285, which acts as the Proton donor. Active-site residues include His306 and Lys420.

Belongs to the GPI family.

It localises to the cytoplasm. The catalysed reaction is alpha-D-glucose 6-phosphate = beta-D-fructose 6-phosphate. Its pathway is carbohydrate biosynthesis; gluconeogenesis. The protein operates within carbohydrate degradation; glycolysis; D-glyceraldehyde 3-phosphate and glycerone phosphate from D-glucose: step 2/4. Its function is as follows. Catalyzes the reversible isomerization of glucose-6-phosphate to fructose-6-phosphate. This is Glucose-6-phosphate isomerase from Staphylococcus aureus (strain USA300).